We begin with the raw amino-acid sequence, 276 residues long: Src-like-adapter (276 aa).

Gly-2 is lipidated: N-myristoyl glycine. Residues 22–82 enclose the SH3 domain; it reads LDSDFLAVLS…PGICVARVYH (61 aa). An SH2 domain is found at 84–175; the sequence is WLFEGLGRDK…GLCCVLTTPC (92 aa). Residues 212–276 form an SLA C-terminal region; sequence EGTENPLGVD…FFSSPPYFED (65 aa). Ser-253 carries the post-translational modification Phosphoserine. Tyr-273 bears the Phosphotyrosine mark.

Interacts with EPHA2, VAV1, LCP2 and PDGFRB. Homodimer. Homodimerization and interaction with phosphorylated CBL occurs via its C-terminal domain. Interacts with phosphorylated proteins ZAP70, CD3Z, SYK and LAT via its SH2 domain. In terms of tissue distribution, expressed in lung and fetal brain. Weakly expressed in heart, adult brain, placenta, liver, skeletal muscle, kidney and pancreas.

The protein resides in the cytoplasm. The protein localises to the endosome. Functionally, adapter protein, which negatively regulates T-cell receptor (TCR) signaling. Inhibits T-cell antigen-receptor induced activation of nuclear factor of activated T-cells. Involved in the negative regulation of positive selection and mitosis of T-cells. May act by linking signaling proteins such as ZAP70 with CBL, leading to a CBL dependent degradation of signaling proteins. The protein is Src-like-adapter (SLA) of Homo sapiens (Human).